Reading from the N-terminus, the 190-residue chain is Remorin (190 aa).

Positions 1-12 (MAEEQKTSKVDV) are enriched in basic and acidic residues. Disordered stretches follow at residues 1–45 (MAEE…VESK) and 50–69 (VEKP…SADR). Phosphoserine is present on Ser14. Thr58 is subject to Phosphothreonine. Residues 92–147 (EKSKAENRAQKKISDVHAWENSKKAAVEAQLRKIEEKLEKKKAQYGEKMKNKVAAI) adopt a coiled-coil conformation.

The protein belongs to the remorin family. In terms of assembly, may polymerize to form filamentous structures. As to expression, expressed in roots, leaves, stems, flowers and siliques, with a maximal expression in apical regions.

Exhibits a non sequence-specific DNA-binding activity. The protein is Remorin (DBP) of Arabidopsis thaliana (Mouse-ear cress).